A 312-amino-acid chain; its full sequence is 2-phospho-L-lactate transferase (312 aa).

Residues D50 and K89 each coordinate 7,8-didemethyl-8-hydroxy-5-deazariboflavin.

The protein belongs to the CofD family. In terms of assembly, homodimer. Requires Mg(2+) as cofactor.

The catalysed reaction is (2S)-lactyl-2-diphospho-5'-guanosine + 7,8-didemethyl-8-hydroxy-5-deazariboflavin = oxidized coenzyme F420-0 + GMP + H(+). The protein operates within cofactor biosynthesis; coenzyme F420 biosynthesis. Its function is as follows. Catalyzes the transfer of the 2-phospholactate moiety from (2S)-lactyl-2-diphospho-5'-guanosine to 7,8-didemethyl-8-hydroxy-5-deazariboflavin (FO) with the formation of oxidized coenzyme F420-0 and GMP. The sequence is that of 2-phospho-L-lactate transferase from Methanococcus vannielii (strain ATCC 35089 / DSM 1224 / JCM 13029 / OCM 148 / SB).